The following is a 415-amino-acid chain: Very late expression factor 1 (415 aa).

One can recognise a Tyr recombinase domain in the interval 171 to 357 (REIINTILDC…DESDDNDEDD (187 aa)). Active-site residues include Arg-214, Lys-242, Arg-307, and His-330. A disordered region spans residues 339–415 (YLNKYDVGVD…GDDADLLSFN (77 aa)). Tyr-343 acts as the O-(3'-phospho-DNA)-tyrosine intermediate in catalysis. Positions 346 to 363 (GVDESDDNDEDDDDDEND) are enriched in acidic residues. Positions 375 to 404 (NISNYDINNSSSGNSSSNNTSGNDFNNNIS) are enriched in low complexity.

The protein belongs to the 'phage' integrase family.

Functionally, involved in very late gene activation. This is Very late expression factor 1 (VLF-1) from Heliothis zea nuclear polyhedrosis virus (HzSNPV).